The primary structure comprises 449 residues: Rubisco accumulation factor 1.2, chloroplastic (449 aa).

The N-terminal 61 residues, 1–61 (MFSLKSLISS…NMIPKNPPAR (61 aa)), are a transit peptide targeting the chloroplast. The N-terminal alpha-helix stretch occupies residues 75–264 (IPTQFRSLDS…KAKNRLNTEL (190 aa)). A coiled-coil region spans residues 262–288 (TELYGDKEAEKEKEKKKKEEEVKAIRI). The C-terminal beta sheet stretch occupies residues 288–434 (IPVVRLKFGE…GMVVLVVRPP (147 aa)).

This sequence belongs to the RAF family. In terms of assembly, homodimer.

Its subcellular location is the plastid. The protein resides in the chloroplast. Required for assembly or stability of RuBisCO. Acts at a postchaperonin step to fold and/or assemble the large subunit (rbcL) into RuBisCO. RAF1 brackets an rbcL dimer (rbcL(2)), leading to rbcL(8)-RAF1(4) complex formation. In the next step, RBCS displaces RAF1, thus resulting in holoenzyme formation. The chain is Rubisco accumulation factor 1.2, chloroplastic from Arabidopsis thaliana (Mouse-ear cress).